Consider the following 252-residue polypeptide: Adenosylcobinamide-GDP ribazoletransferase (252 aa).

7 helical membrane-spanning segments follow: residues 4-24 (LLLLNLLASIIFYTSIPLPYI), 35-55 (LVPMVGLIIGVILGLLDGGMN), 65-85 (SALVVALWIFITGGLHLDGAM), 102-122 (VMADSATGAFGAMSAIAILLL), 178-198 (LLPGLCLMVAVSSLFWLVNNH), 201-221 (LITVVGLITGSAIASLTAAWF), and 232-252 (TYGAVVEWTEALFLCVLTILT).

Belongs to the CobS family. Requires Mg(2+) as cofactor.

Its subcellular location is the cell inner membrane. The catalysed reaction is alpha-ribazole + adenosylcob(III)inamide-GDP = adenosylcob(III)alamin + GMP + H(+). It carries out the reaction alpha-ribazole 5'-phosphate + adenosylcob(III)inamide-GDP = adenosylcob(III)alamin 5'-phosphate + GMP + H(+). Its pathway is cofactor biosynthesis; adenosylcobalamin biosynthesis; adenosylcobalamin from cob(II)yrinate a,c-diamide: step 7/7. Its function is as follows. Joins adenosylcobinamide-GDP and alpha-ribazole to generate adenosylcobalamin (Ado-cobalamin). Also synthesizes adenosylcobalamin 5'-phosphate from adenosylcobinamide-GDP and alpha-ribazole 5'-phosphate. The chain is Adenosylcobinamide-GDP ribazoletransferase from Trichormus variabilis (strain ATCC 29413 / PCC 7937) (Anabaena variabilis).